Reading from the N-terminus, the 373-residue chain is Schlafen-like protein 1 (373 aa).

Residues 1–67 are disordered; it reads MAALFEENDS…ELSSEEVDIP (67 aa). The tract at residues 247–373 is SLFN-like fold; it reads KAGAKIEFRT…NQVYRLESSV (127 aa).

This sequence belongs to the Schlafen family. As to quaternary structure, component of the trimeric PUCH (precursor of 21U RNA 5'-end cleavage holoenzyme) complex; consisting of tofu-1, tofu-2 and either slfl-3 or slfl-4; which is required for processing of piRNA precursors. Within the complex, interacts (via N-terminus) with tofu-2 (via N-terminus); the interaction stabilizes tofu-2 and may form a functional nuclease. Within the complex, required for the interaction of tofu-2 (via N-terminus) with slfl-3 (via N-terminus). Interacts (via residues 82-172) with the PETISCO complex subunit tofu-6 (via residues 120-314); the interaction between the PETISCO and PUCH complex members enhances piRNA production in vivo. In terms of tissue distribution, expressed in the germline.

The protein localises to the cytoplasm. Its function is as follows. Component of the trimeric PUCH (precursor of 21U RNA 5'-end cleavage holoenzyme) complex, that acts as an endoribonuclease processing the 5'-end of precursor Piwi-interacting RNAs (piRNAs). The PUCH complex consists of tofu-1, tofu-2 and either slfl-3 or slfl-4, with tofu-2 exhibiting endoribonuclease activity. PUCH-mediated processing strictly requires a 7-methyl-G cap (m7 G-cap) and an uracil at position three (U3). PUCH also exhibits a strict bias for piRNA precursors with an A or G at position 1. Mature piRNA production is enhanced by the interaction of PUCH with the PETISCO complex, which is stabilizing piRNA precursors and allows their processing by PUCH. This Caenorhabditis elegans protein is Schlafen-like protein 1.